A 591-amino-acid chain; its full sequence is Trihelix transcription factor PTL (591 aa).

Positions 1 to 32 (MDQDQHPQYGIPELRQLMKGGGRTTTTTPSTS) are disordered. Residues 118–177 (GRWPRQETLTLLEIRSRLDHKFKEANQKGPLWDEVSRIMSEEHGYQRSGKKCREKFENLY) form the Myb-like 1 domain. The interval 380–410 (CSSPEERTNGNNEIRNNSETQNENGSDQTMT) is disordered. The span at 388–410 (NGNNEIRNNSETQNENGSDQTMT) shows a compositional bias: polar residues. One can recognise a Myb-like 2 domain in the interval 422-479 (WGEQEILKLMEIRTSMDSTFQEILGGCSDEFLWEEIAAKLIQLGFDQRSALLCKEKWE). The disordered stretch occupies residues 491–551 (QINKKRKDNS…SNANANANVT (61 aa)). Positions 515 to 534 (IYNNRESGYNDNDPHQINEQ) are enriched in polar residues. Residues 535–551 (GNVGSSTSNANANANVT) are compositionally biased toward low complexity.

In terms of assembly, interacts with KIN10. Confined to flowers, at low levels. Also present in 7-days-old seedlings. Barely detectable in other tissues such as young seedlings, roots, stems, leaves and siliques. Expressed in flower primordia, more precisely between newly arisen sepal primordia and also at the basal margins of developing sepals.

It is found in the nucleus. In terms of biological role, transcription factor that prevents growth. Regulates perianth architecture in flower, mostly in the second whorl, probably by suppressing growth between initiating sepals, ensuring that they remain separate, and by modulating organ shapes. Required for the establishment of auxin flux. The sequence is that of Trihelix transcription factor PTL (PTL) from Arabidopsis thaliana (Mouse-ear cress).